The following is a 270-amino-acid chain: ATP synthase subunit a (270 aa).

6 consecutive transmembrane segments (helical) span residues 27-47 (FWTF…VFIL), 90-110 (IAPL…MDLI), 147-166 (VNMT…FYSV), 182-202 (PFNT…SLIA), 211-231 (LFGN…TLGV), and 238-258 (FLWA…FMML).

It belongs to the ATPase A chain family. F-type ATPases have 2 components, CF(1) - the catalytic core - and CF(0) - the membrane proton channel. CF(1) has five subunits: alpha(3), beta(3), gamma(1), delta(1), epsilon(1). CF(0) has three main subunits: a(1), b(2) and c(9-12). The alpha and beta chains form an alternating ring which encloses part of the gamma chain. CF(1) is attached to CF(0) by a central stalk formed by the gamma and epsilon chains, while a peripheral stalk is formed by the delta and b chains.

The protein localises to the cell inner membrane. Its function is as follows. Key component of the proton channel; it plays a direct role in the translocation of protons across the membrane. In Pseudoalteromonas atlantica (strain T6c / ATCC BAA-1087), this protein is ATP synthase subunit a.